The primary structure comprises 467 residues: GTPase Der (467 aa).

2 consecutive EngA-type G domains span residues 25 to 188 (PVVA…PEAP) and 199 to 372 (RRVA…ASWE). GTP contacts are provided by residues 31–38 (GRPNVGKS), 78–82 (DTGGW), 140–143 (NKAD), 205–212 (GRPNVGKS), 252–256 (DTAGL), and 317–320 (NKWD). A KH-like domain is found at 373-455 (TRVPTAQLNA…PIEIAVRPRK (83 aa)).

Belongs to the TRAFAC class TrmE-Era-EngA-EngB-Septin-like GTPase superfamily. EngA (Der) GTPase family. In terms of assembly, associates with the 50S ribosomal subunit.

Functionally, GTPase that plays an essential role in the late steps of ribosome biogenesis. This chain is GTPase Der, found in Salinispora arenicola (strain CNS-205).